A 1606-amino-acid polypeptide reads, in one-letter code: Pentafunctional AROM polypeptide (1606 aa).

Positions 1-390 (MANADVLKVS…YEPKATVVPD (390 aa)) are 3-dehydroquinate synthase. NAD(+) is bound by residues 45–47 (DTN), 85–88 (ETSK), 116–118 (GGV), and aspartate 121. A 7-phospho-2-dehydro-3-deoxy-D-arabino-heptonate-binding site is contributed by arginine 132. 141 to 142 (TT) serves as a coordination point for NAD(+). Aspartate 148 and lysine 154 together coordinate 7-phospho-2-dehydro-3-deoxy-D-arabino-heptonate. NAD(+) is bound at residue lysine 163. Asparagine 164 contributes to the 7-phospho-2-dehydro-3-deoxy-D-arabino-heptonate binding site. NAD(+) is bound by residues 181–184 (FLET) and asparagine 192. Glutamate 196 lines the Zn(2+) pocket. 7-phospho-2-dehydro-3-deoxy-D-arabino-heptonate is bound by residues 196–199 (EVVK) and lysine 256. Glutamate 266 acts as the Proton acceptor; for 3-dehydroquinate synthase activity in catalysis. Residues 270 to 274 (RNLVN) and histidine 277 contribute to the 7-phospho-2-dehydro-3-deoxy-D-arabino-heptonate site. Histidine 277 contacts Zn(2+). Histidine 281 acts as the Proton acceptor; for 3-dehydroquinate synthase activity in catalysis. 2 residues coordinate 7-phospho-2-dehydro-3-deoxy-D-arabino-heptonate: histidine 293 and lysine 362. Histidine 293 lines the Zn(2+) pocket. An EPSP synthase region spans residues 403-850 (VIPGVPRHHP…WDDLENKIGL (448 aa)). The active-site For EPSP synthase activity is the cysteine 832. A shikimate kinase region spans residues 875 to 1070 (AASIILIGMR…TSGRRSYFLC (196 aa)). An ATP-binding site is contributed by 882-889 (GMRGTGKT). The segment at 1071–1296 (LTYPDVTQSF…AAPGQLSFKQ (226 aa)) is 3-dehydroquinase. Histidine 1198 serves as the catalytic Proton acceptor; for 3-dehydroquinate dehydratase activity. Residue lysine 1226 is the Schiff-base intermediate with substrate; for 3-dehydroquinate dehydratase activity of the active site. Residues 1309-1606 (AQRFYLFGTP…QFVFEEECES (298 aa)) are shikimate dehydrogenase.

The protein in the N-terminal section; belongs to the sugar phosphate cyclases superfamily. Dehydroquinate synthase family. It in the 2nd section; belongs to the EPSP synthase family. This sequence in the 3rd section; belongs to the shikimate kinase family. In the 4th section; belongs to the type-I 3-dehydroquinase family. The protein in the C-terminal section; belongs to the shikimate dehydrogenase family. Homodimer. Zn(2+) is required as a cofactor.

It localises to the cytoplasm. The catalysed reaction is 7-phospho-2-dehydro-3-deoxy-D-arabino-heptonate = 3-dehydroquinate + phosphate. It carries out the reaction 3-dehydroquinate = 3-dehydroshikimate + H2O. It catalyses the reaction shikimate + NADP(+) = 3-dehydroshikimate + NADPH + H(+). The enzyme catalyses shikimate + ATP = 3-phosphoshikimate + ADP + H(+). The catalysed reaction is 3-phosphoshikimate + phosphoenolpyruvate = 5-O-(1-carboxyvinyl)-3-phosphoshikimate + phosphate. Its pathway is metabolic intermediate biosynthesis; chorismate biosynthesis; chorismate from D-erythrose 4-phosphate and phosphoenolpyruvate: step 2/7. It functions in the pathway metabolic intermediate biosynthesis; chorismate biosynthesis; chorismate from D-erythrose 4-phosphate and phosphoenolpyruvate: step 3/7. It participates in metabolic intermediate biosynthesis; chorismate biosynthesis; chorismate from D-erythrose 4-phosphate and phosphoenolpyruvate: step 4/7. The protein operates within metabolic intermediate biosynthesis; chorismate biosynthesis; chorismate from D-erythrose 4-phosphate and phosphoenolpyruvate: step 5/7. Its pathway is metabolic intermediate biosynthesis; chorismate biosynthesis; chorismate from D-erythrose 4-phosphate and phosphoenolpyruvate: step 6/7. The AROM polypeptide catalyzes 5 consecutive enzymatic reactions in prechorismate polyaromatic amino acid biosynthesis. This chain is Pentafunctional AROM polypeptide, found in Laccaria bicolor (strain S238N-H82 / ATCC MYA-4686) (Bicoloured deceiver).